Reading from the N-terminus, the 142-residue chain is Putative pre-16S rRNA nuclease (142 aa).

This sequence belongs to the YqgF nuclease family.

The protein localises to the cytoplasm. Its function is as follows. Could be a nuclease involved in processing of the 5'-end of pre-16S rRNA. The polypeptide is Putative pre-16S rRNA nuclease (Staphylococcus epidermidis (strain ATCC 35984 / DSM 28319 / BCRC 17069 / CCUG 31568 / BM 3577 / RP62A)).